The following is a 375-amino-acid chain: V-type proton ATPase subunit C (375 aa).

Belongs to the V-ATPase C subunit family. V-ATPase is a heteromultimeric enzyme composed of a peripheral catalytic V1 complex (components A to H) attached to an integral membrane V0 proton pore complex (components: a, c, c'', d and e). Phosphorylated on Ser/Thr residues by WNK8.

It is found in the vacuole membrane. In terms of biological role, subunit of the peripheral V1 complex of vacuolar ATPase. Subunit C is necessary for the assembly of the catalytic sector of the enzyme and is likely to have a specific function in its catalytic activity. V-ATPase is responsible for acidifying a variety of intracellular compartments in eukaryotic cells. The chain is V-type proton ATPase subunit C (VHA-C) from Arabidopsis thaliana (Mouse-ear cress).